The sequence spans 317 residues: Glutaminase (317 aa).

Substrate contacts are provided by S67, N118, E162, N169, Y193, Y245, and V263.

This sequence belongs to the glutaminase family. Homotetramer.

It catalyses the reaction L-glutamine + H2O = L-glutamate + NH4(+). This is Glutaminase from Brucella canis (strain ATCC 23365 / NCTC 10854 / RM-666).